A 108-amino-acid polypeptide reads, in one-letter code: Curli assembly protein CsgC (108 aa).

The signal sequence occupies residues 1–8 (MHTLLLLA).

It belongs to the CsgC/AgfC family.

The protein resides in the periplasm. In terms of biological role, plays a role in the extracellular assembly of CsgA into thin aggregative fimbriae (Tafi) fibers. Assembly may also require CsgE. Tafi are thought to be assembled via an extracellular nucleation-precipitation (ENP) pathway, and possibly also via an intracellular non-CsgC-dependent pathway. In Salmonella arizonae (strain ATCC BAA-731 / CDC346-86 / RSK2980), this protein is Curli assembly protein CsgC.